Reading from the N-terminus, the 403-residue chain is S-adenosylmethionine synthase (403 aa).

His-17 contacts ATP. Position 19 (Asp-19) interacts with Mg(2+). Position 45 (Glu-45) interacts with K(+). The L-methionine site is built by Glu-58 and Gln-104. A flexible loop region spans residues 104–114; that stretch reads QSPDIAQGVDT. ATP contacts are provided by residues 179 to 181, 250 to 251, Asp-259, 265 to 266, Ala-282, and Lys-286; these read DGK, KF, and RK. Residue Asp-259 coordinates L-methionine. Lys-290 lines the L-methionine pocket.

The protein belongs to the AdoMet synthase family. Homotetramer; dimer of dimers. Mg(2+) serves as cofactor. The cofactor is K(+).

Its subcellular location is the cytoplasm. The catalysed reaction is L-methionine + ATP + H2O = S-adenosyl-L-methionine + phosphate + diphosphate. The protein operates within amino-acid biosynthesis; S-adenosyl-L-methionine biosynthesis; S-adenosyl-L-methionine from L-methionine: step 1/1. In terms of biological role, catalyzes the formation of S-adenosylmethionine (AdoMet) from methionine and ATP. The overall synthetic reaction is composed of two sequential steps, AdoMet formation and the subsequent tripolyphosphate hydrolysis which occurs prior to release of AdoMet from the enzyme. The protein is S-adenosylmethionine synthase of Mycobacterium avium (strain 104).